We begin with the raw amino-acid sequence, 459 residues long: Putrescine aminotransferase (459 aa).

Pyridoxal 5'-phosphate contacts are provided by residues 150–151 (GT) and Gln-274. N6-(pyridoxal phosphate)lysine is present on Lys-300. A pyridoxal 5'-phosphate-binding site is contributed by Thr-332.

It belongs to the class-III pyridoxal-phosphate-dependent aminotransferase family. Putrescine aminotransferase subfamily. Requires pyridoxal 5'-phosphate as cofactor.

The catalysed reaction is an alkane-alpha,omega-diamine + 2-oxoglutarate = an omega-aminoaldehyde + L-glutamate. It carries out the reaction putrescine + 2-oxoglutarate = 1-pyrroline + L-glutamate + H2O. It catalyses the reaction cadaverine + 2-oxoglutarate = 5-aminopentanal + L-glutamate. It participates in amine and polyamine degradation; putrescine degradation; 4-aminobutanal from putrescine (transaminase route): step 1/1. Catalyzes the aminotransferase reaction from putrescine to 2-oxoglutarate, leading to glutamate and 4-aminobutanal, which spontaneously cyclizes to form 1-pyrroline. This is the first step in one of two pathways for putrescine degradation, where putrescine is converted into 4-aminobutanoate (gamma-aminobutyrate or GABA) via 4-aminobutanal. Also functions as a cadaverine transaminase in a a L-lysine degradation pathway to succinate that proceeds via cadaverine, glutarate and L-2-hydroxyglutarate. This is Putrescine aminotransferase from Salmonella paratyphi B (strain ATCC BAA-1250 / SPB7).